A 96-amino-acid polypeptide reads, in one-letter code: Small ribosomal subunit protein bS6c (96 aa).

It belongs to the bacterial ribosomal protein bS6 family.

Its subcellular location is the plastid. It is found in the chloroplast. Binds together with bS18 to 16S ribosomal RNA. The polypeptide is Small ribosomal subunit protein bS6c (rps6) (Trieres chinensis (Marine centric diatom)).